Consider the following 859-residue polypeptide: Suppressor protein MPT5 (859 aa).

Residues 85–108 (MNNTSTSNSANSFSPNPNAASNST) form a disordered region. Low complexity predominate over residues 86–108 (NNTSTSNSANSFSPNPNAASNST). The PUM-HD domain maps to 188–596 (DNSSFGLSSS…KIKLKVKAYA (409 aa)). Pumilio repeat units lie at residues 209–247 (PLRD…LMYE), 248–283 (QIKP…LLIQ), 284–320 (TIYP…LIIK), 325–362 (EFTS…FIID), 363–400 (AIVE…KISV), 401–438 (KIVQ…ELFN), 439–474 (RLSN…FIVN), and 503–539 (DIFT…AYNK). The interval 620-658 (TINNENKNPHNKNSHNHNHNHNHNHAHNNNNNNNQKSHT) is disordered. A compositionally biased stretch (basic residues) spans 628 to 645 (PHNKNSHNHNHNHNHNHA). S662, S834, and S838 each carry phosphoserine.

The protein localises to the cytoplasm. RNA-binding protein involved in post-transcriptional regulation. Negatively regulates expression of HO by binding to the 3'-UTR of HO mRNA. Predominantly binds to mRNAs encoding chromatin modifiers and spindle pole body components. Recognizes and binds to 5'-TGTAA[CT]A[AT]TA-3' in the 3'-UTR of target mRNAs. Multicopy suppressor of POP2 mutation. Required for high temperature growth. This chain is Suppressor protein MPT5 (MPT5), found in Saccharomyces cerevisiae (strain ATCC 204508 / S288c) (Baker's yeast).